Reading from the N-terminus, the 328-residue chain is D-cysteine desulfhydrase (328 aa).

N6-(pyridoxal phosphate)lysine is present on lysine 51.

It belongs to the ACC deaminase/D-cysteine desulfhydrase family. In terms of assembly, homodimer. The cofactor is pyridoxal 5'-phosphate.

It carries out the reaction D-cysteine + H2O = hydrogen sulfide + pyruvate + NH4(+) + H(+). Functionally, catalyzes the alpha,beta-elimination reaction of D-cysteine and of several D-cysteine derivatives. It could be a defense mechanism against D-cysteine. The polypeptide is D-cysteine desulfhydrase (Salmonella schwarzengrund (strain CVM19633)).